The primary structure comprises 330 residues: Calponin-3 (330 aa).

Lysine 23 bears the N6-acetyllysine mark. The Calponin-homology (CH) domain occupies 26–130 (QQAEEDLRNW…TLVALAGLAK (105 aa)). Lysine 158 bears the N6-methyllysine mark. Calponin-like repeat units follow at residues 164-189 (IGLQ…RHLY), 204-229 (ISLQ…RDIY), and 243-268 (ISLQ…RQVY). Residues 279–330 (PVIHNGSQGTGTNGSEISDSDYQAEYPDEYHGEYPDDYPREYQYGDDQGIDY) form a disordered region. The span at 306-318 (DEYHGEYPDDYPR) shows a compositional bias: basic and acidic residues.

The protein belongs to the calponin family.

In terms of biological role, thin filament-associated protein that is implicated in the regulation and modulation of smooth muscle contraction. It is capable of binding to actin, calmodulin and tropomyosin. The interaction of calponin with actin inhibits the actomyosin Mg-ATPase activity. This Mus musculus (Mouse) protein is Calponin-3 (Cnn3).